A 375-amino-acid polypeptide reads, in one-letter code: Flagellin (375 aa).

This sequence belongs to the bacterial flagellin family.

It localises to the secreted. The protein localises to the bacterial flagellum. Functionally, flagellin is the subunit protein which polymerizes to form the filaments of bacterial flagella. Flagella are an important component in the invasiveness of B.bacilliformis. In Bartonella bacilliformis, this protein is Flagellin.